A 110-amino-acid polypeptide reads, in one-letter code: Large ribosomal subunit protein uL22 (110 aa).

It belongs to the universal ribosomal protein uL22 family. In terms of assembly, part of the 50S ribosomal subunit.

In terms of biological role, this protein binds specifically to 23S rRNA; its binding is stimulated by other ribosomal proteins, e.g. L4, L17, and L20. It is important during the early stages of 50S assembly. It makes multiple contacts with different domains of the 23S rRNA in the assembled 50S subunit and ribosome. The globular domain of the protein is located near the polypeptide exit tunnel on the outside of the subunit, while an extended beta-hairpin is found that lines the wall of the exit tunnel in the center of the 70S ribosome. In Variovorax paradoxus (strain S110), this protein is Large ribosomal subunit protein uL22.